The following is a 222-amino-acid chain: LHFPL tetraspan subfamily member 3 protein (222 aa).

A run of 4 helical transmembrane segments spans residues 22 to 42 (IGVL…VCFI), 96 to 116 (FFIG…TLFF), 126 to 146 (ICAW…MIFP), and 177 to 197 (ILAI…VVLG).

Belongs to the LHFP family. In terms of tissue distribution, brain-specific.

It localises to the membrane. This is LHFPL tetraspan subfamily member 3 protein from Mus musculus (Mouse).